Reading from the N-terminus, the 293-residue chain is Diaminopimelate epimerase (293 aa).

Substrate is bound by residues Asn-13, Gln-46, and Asn-66. Cys-75 functions as the Proton donor in the catalytic mechanism. Substrate contacts are provided by residues 76-77 (GN), Asn-162, Asn-195, and 213-214 (ER). Cys-222 functions as the Proton acceptor in the catalytic mechanism. 223–224 (GT) contributes to the substrate binding site.

The protein belongs to the diaminopimelate epimerase family. As to quaternary structure, homodimer.

Its subcellular location is the cytoplasm. It catalyses the reaction (2S,6S)-2,6-diaminopimelate = meso-2,6-diaminopimelate. The protein operates within amino-acid biosynthesis; L-lysine biosynthesis via DAP pathway; DL-2,6-diaminopimelate from LL-2,6-diaminopimelate: step 1/1. In terms of biological role, catalyzes the stereoinversion of LL-2,6-diaminopimelate (L,L-DAP) to meso-diaminopimelate (meso-DAP), a precursor of L-lysine and an essential component of the bacterial peptidoglycan. In Psychrobacter sp. (strain PRwf-1), this protein is Diaminopimelate epimerase.